A 122-amino-acid polypeptide reads, in one-letter code: Large ribosomal subunit protein uL14 (122 aa).

The protein belongs to the universal ribosomal protein uL14 family. In terms of assembly, part of the 50S ribosomal subunit. Forms a cluster with proteins L3 and L19. In the 70S ribosome, L14 and L19 interact and together make contacts with the 16S rRNA in bridges B5 and B8.

In terms of biological role, binds to 23S rRNA. Forms part of two intersubunit bridges in the 70S ribosome. The sequence is that of Large ribosomal subunit protein uL14 from Rhodococcus erythropolis (strain PR4 / NBRC 100887).